A 287-amino-acid polypeptide reads, in one-letter code: Ribonuclease Z (287 aa).

7 residues coordinate Zn(2+): His64, His66, Asp68, His69, His124, Asp191, and His250. Asp68 serves as the catalytic Proton acceptor.

The protein belongs to the RNase Z family. In terms of assembly, homodimer. Requires Zn(2+) as cofactor.

It catalyses the reaction Endonucleolytic cleavage of RNA, removing extra 3' nucleotides from tRNA precursor, generating 3' termini of tRNAs. A 3'-hydroxy group is left at the tRNA terminus and a 5'-phosphoryl group is left at the trailer molecule.. In terms of biological role, zinc phosphodiesterase, which displays some tRNA 3'-processing endonuclease activity. Probably involved in tRNA maturation, by removing a 3'-trailer from precursor tRNA. The chain is Ribonuclease Z from Pyrobaculum aerophilum (strain ATCC 51768 / DSM 7523 / JCM 9630 / CIP 104966 / NBRC 100827 / IM2).